The following is a 540-amino-acid chain: Chaperonin GroEL 2 (540 aa).

Residues 29-32 (TLGP), 86-90 (DGTTT), Gly-413, 476-478 (NAA), and Asp-492 contribute to the ATP site.

It belongs to the chaperonin (HSP60) family. As to quaternary structure, forms a cylinder of 14 subunits composed of two heptameric rings stacked back-to-back. Interacts with the co-chaperonin GroES.

It localises to the cytoplasm. It carries out the reaction ATP + H2O + a folded polypeptide = ADP + phosphate + an unfolded polypeptide.. Its function is as follows. Together with its co-chaperonin GroES, plays an essential role in assisting protein folding. The GroEL-GroES system forms a nano-cage that allows encapsulation of the non-native substrate proteins and provides a physical environment optimized to promote and accelerate protein folding. The polypeptide is Chaperonin GroEL 2 (Streptomyces albus G).